Consider the following 366-residue polypeptide: Inactive protein RESTRICTED TEV MOVEMENT 2 (366 aa).

The 108-residue stretch at 14–121 (VQYEDFVPKS…LPETSRTEAA (108 aa)) folds into the sHSP domain. The A-1 repeat unit spans residues 129–133 (LEEKR). Residues 129-220 (LEEKRLLEES…LEERRLEERK (92 aa)) are 6 X 5 AA repeats A of L-E-E-[SKR]-[ERK]. The stretch at 135–139 (LEESR) is one A-2 repeat. Residues 156-160 (LEEKE) form an A-3 repeat. One copy of the B-1 repeat lies at 163 to 176 (IRKLQEEAKAKEEA). A 3 X 14 AA repeats B of [IMA]-[RK]-K-L-Q-E-E-A-K-A-K-E-[EK]-[LA] region spans residues 163-206 (IRKLQEEAKAKEEAEMRKLQEEAKANEEAAAKKLQEEIEAKEKL). The B-2 repeat unit spans residues 178–191 (MRKLQEEAKANEEA). A B-3 repeat occupies 193 to 205 (AKKLQEEIEAKEK). The A-4 repeat unit spans residues 206 to 210 (LEERK). One copy of the A-5 repeat lies at 211 to 215 (LEERR). The A-6 repeat unit spans residues 216-220 (LEERK). Residues 322 to 342 (LMMNVGVAALVIFALGAYVSY) form a helical membrane-spanning segment. A disordered region spans residues 345-366 (CSSSSSSSSSSPSSSSSSTKPE). Residues 346–366 (SSSSSSSSSSPSSSSSSTKPE) are compositionally biased toward low complexity.

Belongs to the small heat shock protein (HSP20) family.

The protein resides in the cell membrane. Its function is as follows. Seems to not be involved in heat resistance. Unable to mediate restriction of long-distance movement of the pathogenic tobacco etch virus (TEV) without causing a hypersensitive response or inducing systemic acquired resistance. This is Inactive protein RESTRICTED TEV MOVEMENT 2 (RTM2) from Arabidopsis thaliana (Mouse-ear cress).